The sequence spans 129 residues: Glycine cleavage system H protein (129 aa).

One can recognise a Lipoyl-binding domain in the interval 23 to 105 (SAVVGITEHA…YGEGWLAKFS (83 aa)). Lys64 is subject to N6-lipoyllysine.

It belongs to the GcvH family. As to quaternary structure, the glycine cleavage system is composed of four proteins: P, T, L and H. Requires (R)-lipoate as cofactor.

Its function is as follows. The glycine cleavage system catalyzes the degradation of glycine. The H protein shuttles the methylamine group of glycine from the P protein to the T protein. This chain is Glycine cleavage system H protein, found in Herpetosiphon aurantiacus (strain ATCC 23779 / DSM 785 / 114-95).